The chain runs to 934 residues: Pesticidal crystal protein Cry1Aa (934 aa).

Belongs to the delta endotoxin family.

In terms of biological role, promotes colloidosmotic lysis by binding to the midgut epithelial cells of many lepidopteran larvae. This is Pesticidal crystal protein Cry1Aa (cry1Aa) from Bacillus thuringiensis subsp. sotto.